The sequence spans 160 residues: uncharacterized protein (160 aa).

This is an uncharacterized protein from Magallana gigas (Pacific oyster).